The following is a 412-amino-acid chain: Imidazolonepropionase (412 aa).

Fe(3+)-binding residues include His-76 and His-78. Zn(2+)-binding residues include His-76 and His-78. Residues Arg-85, Tyr-148, and His-181 each coordinate 4-imidazolone-5-propanoate. Tyr-148 contributes to the N-formimidoyl-L-glutamate binding site. A Fe(3+)-binding site is contributed by His-242. His-242 lines the Zn(2+) pocket. Residue Glu-245 coordinates 4-imidazolone-5-propanoate. Asp-317 is a Fe(3+) binding site. A Zn(2+)-binding site is contributed by Asp-317. Residues Asn-319 and Gly-321 each contribute to the N-formimidoyl-L-glutamate site. Ser-322 is a 4-imidazolone-5-propanoate binding site.

This sequence belongs to the metallo-dependent hydrolases superfamily. HutI family. Zn(2+) serves as cofactor. It depends on Fe(3+) as a cofactor.

It localises to the cytoplasm. The enzyme catalyses 4-imidazolone-5-propanoate + H2O = N-formimidoyl-L-glutamate. Its pathway is amino-acid degradation; L-histidine degradation into L-glutamate; N-formimidoyl-L-glutamate from L-histidine: step 3/3. Functionally, catalyzes the hydrolytic cleavage of the carbon-nitrogen bond in imidazolone-5-propanoate to yield N-formimidoyl-L-glutamate. It is the third step in the universal histidine degradation pathway. In Staphylococcus aureus (strain Mu50 / ATCC 700699), this protein is Imidazolonepropionase.